We begin with the raw amino-acid sequence, 66 residues long: Neurotoxin BmK AGP-SYPU1 (66 aa).

An LCN-type CS-alpha/beta domain is found at 2 to 64 (RDAYIAQNYN…KPIRIPGKCH (63 aa)). 4 cysteine pairs are disulfide-bonded: cysteine 12-cysteine 63, cysteine 16-cysteine 36, cysteine 22-cysteine 46, and cysteine 26-cysteine 48. Positions 65–66 (RR) are cleaved as a propeptide — removed by a carboxypeptidase.

Expressed by the venom gland.

The protein localises to the secreted. In terms of biological role, alpha toxins bind voltage-independently at site-3 of sodium channels (Nav) and inhibit the inactivation of the activated channels, thereby blocking neuronal transmission. This toxin has a strong analgesic effect when administered to mice by intraperitoneal injection. The protein is Neurotoxin BmK AGP-SYPU1 of Olivierus martensii (Manchurian scorpion).